We begin with the raw amino-acid sequence, 184 residues long: MIIISKSAKHYLSKLLSKKKKGTNIKLSIENKDKENLTCQIKYFDKKEENFNYTKFNFIDFKVYVKKNIFIYIKKIKIDIESKSLKDEIIIKIFKKRENLKNRISNFIKYKINSKLEYHGGFVELIDIKENMFVILKFFGGCNGCSMAKVTLKEGIEKEIKKNFPNIKGVIDITDHIHSESSFY.

Positions 142 and 145 each coordinate [4Fe-4S] cluster.

The protein belongs to the NfuA family. As to quaternary structure, homodimer. Requires [4Fe-4S] cluster as cofactor.

Functionally, involved in iron-sulfur cluster biogenesis. Binds a 4Fe-4S cluster, can transfer this cluster to apoproteins, and thereby intervenes in the maturation of Fe/S proteins. Could also act as a scaffold/chaperone for damaged Fe/S proteins. The polypeptide is Fe/S biogenesis protein NfuA (Wigglesworthia glossinidia brevipalpis).